Reading from the N-terminus, the 1124-residue chain is Zinc finger E-box-binding homeobox 1 (1124 aa).

Disordered regions lie at residues 1-124 (MADG…NHDP) and 142-163 (APEE…NGTP). The span at 18 to 30 (NNVTNYNTVVETN) shows a compositional bias: low complexity. Phosphoserine is present on residues S31 and S33. The span at 44–62 (EESVTDAADCEGVPEDDLP) shows a compositional bias: acidic residues. Positions 72 to 91 (SSEREGNAKNCWEDDRKEGQ) are enriched in basic and acidic residues. The segment at 170–193 (LTCPYCDRGYKRFTSLKEHIKYRH) adopts a C2H2-type 1 zinc-finger fold. Glycyl lysine isopeptide (Lys-Gly) (interchain with G-Cter in SUMO2) cross-links involve residues K186 and K195. C2H2-type zinc fingers lie at residues 200-222 (FSCS…MTSH) and 240-262 (FKCT…LRIH). The C2H2-type 4; atypical zinc finger occupies 268–292 (YECPNCKKRFSHSGSYSSHISSKKC). The disordered stretch occupies residues 304–327 (TGLKTSQCSSPSLSASPGSPTRPQ). K307 participates in a covalent cross-link: Glycyl lysine isopeptide (Lys-Gly) (interchain with G-Cter in SUMO2). The span at 309-322 (SQCSSPSLSASPGS) shows a compositional bias: low complexity. Phosphoserine is present on residues S313 and S322. Residues K331 and K335 each participate in a glycyl lysine isopeptide (Lys-Gly) (interchain with G-Cter in SUMO2) cross-link. K347 is covalently cross-linked (Glycyl lysine isopeptide (Lys-Gly) (interchain with G-Cter in SUMO); alternate). A Glycyl lysine isopeptide (Lys-Gly) (interchain with G-Cter in SUMO2); alternate cross-link involves residue K347. Residues K439, K493, K504, K515, K548, and K553 each participate in a glycyl lysine isopeptide (Lys-Gly) (interchain with G-Cter in SUMO2) cross-link. Disordered regions lie at residues 551–586 (DLKQ…SPSQ) and 636–714 (QISV…SSSR). A DNA-binding region (homeobox; atypical) is located at residues 581 to 640 (NLSPSQPPLKNLLSLLKAYYALNAQPSAEELSKIADSVNLPLDVVKKWFEKMQAGQISVQ). Phosphoserine is present on residues S642, S679, S686, S693, and S700. The segment covering 656–687 (AKNNDQPQSANANEPQDSTVNLQSPLKMTNSP) has biased composition (polar residues). The span at 692–714 (GSTTNGSRSSTPSPSPLNLSSSR) shows a compositional bias: low complexity. The residue at position 702 (T702) is a Phosphothreonine. S704 carries the phosphoserine modification. Residue K774 forms a Glycyl lysine isopeptide (Lys-Gly) (interchain with G-Cter in SUMO); alternate linkage. Residue K774 forms a Glycyl lysine isopeptide (Lys-Gly) (interchain with G-Cter in SUMO2); alternate linkage. Residues 856–898 (PPLKVIQPNGNQDERQDTSSEGVSNVEDQNDSDSTPPKKKMRK) form a disordered region. Polar residues predominate over residues 874–890 (SSEGVSNVEDQNDSDST). 2 C2H2-type zinc fingers span residues 904–926 (YACD…KYEH) and 932–954 (HECG…MRLH). The segment at 960–981 (YQCDKCGKRFSHSGSYSQHMNH) adopts a C2H2-type 7; atypical zinc-finger fold. The disordered stretch occupies residues 989–1124 (EAEERDSTEQ…QVSEEKTNEA (136 aa)). Acidic residues-rich tracts occupy residues 1031–1052 (EEDE…ELQE) and 1062–1084 (DEEE…ENEG). Residues 1085-1099 (EEAKTEGLMKDDRAE) are compositionally biased toward basic and acidic residues. Residues 1100 to 1115 (SQASSLGQKVGESSEQ) show a composition bias toward polar residues.

This sequence belongs to the delta-EF1/ZFH-1 C2H2-type zinc-finger family. In terms of assembly, interacts (via N-terminus) with SMARCA4/BRG1. In terms of processing, ubiquitinated, leading to degradation in a proteasome-dependent manner. Deubiquitinated by USP51, leading to stabilization. As to expression, colocalizes with SMARCA4/BRG1 in E-cadherin-negative cells from established lines, and stroma of normal colon as well as in de-differentiated epithelial cells at the invasion front of colorectal carcinomas (at protein level). Expressed in heart and skeletal muscle, but not in liver, spleen, or pancreas.

The protein resides in the nucleus. Its function is as follows. Acts as a transcriptional repressor. Inhibits interleukin-2 (IL-2) gene expression. Enhances or represses the promoter activity of the ATP1A1 gene depending on the quantity of cDNA and on the cell type. Represses E-cadherin promoter and induces an epithelial-mesenchymal transition (EMT) by recruiting SMARCA4/BRG1. Represses BCL6 transcription in the presence of the corepressor CTBP1. Positively regulates neuronal differentiation. Represses RCOR1 transcription activation during neurogenesis. Represses transcription by binding to the E box (5'-CANNTG-3'). In the absence of TGFB1, acts as a repressor of COL1A2 transcription via binding to the E-box in the upstream enhancer region. In Homo sapiens (Human), this protein is Zinc finger E-box-binding homeobox 1.